Reading from the N-terminus, the 691-residue chain is MSSTSLAWPRTAKSSLLQSADFSSTSKGYDRLGRRAREKLLDREFFLSLLNSASTKREAKSYLARLKAQHSPKPQVKEPEKESKDDAPQPLPSGVNLGSFYGASRSVYDSPVFRHDSTPTPHREISEERLHLSLVKLTTPQLLDDYIIDGVAKTLSQLNRLGMASCVVVDPGAGDHPNALRKIAAEQADRLSNAIDALPDSKSAHLDSVLSLSSTDPDTPTVMSRKALLSPMRDGHIVVVAPIAYTDDVRAVVVPADNAVLALTKELAGLATRPDPDEDPWVTAQRIGDLQREVSLDRVILLDPLGGIPAFSGPQTSHVFINMEQEFDDIEQELLRVRESAASSNQPSASSLLDGDASSIADSNPISKFVNHDVVPVPPEQEAVLPGLRLEERAVDGHLENLSLSQKVLAMLPSASSGIITSPLEVANSAMAPQTTPSGLAVGTRRQRNPLIHNLLTDKPLLSSSLPLSRRAAINGRRGSLTAPSSHTTFVKRGMPLTLVPNPRVQTWTAQNRPRMSLDDPSIDLPRLVHLIEDSFNRKLDVQDYLNRIHDRLAGLIIAGEYEGGAILTWELPPGVEDDGSPASEARMVPYLDKFAVLKRSQGAGGVADIVFNAMVRSCFPNGVCWRSRKDNPVNKWYFERSEGTWKLADTNWTMFWTTPNLPDDLQRFQDYEAVCRSIQPSWADDTGVVD.

The segment covering 1-27 (MSSTSLAWPRTAKSSLLQSADFSSTSK) has biased composition (polar residues). 2 disordered regions span residues 1-29 (MSST…SKGY) and 65-95 (RLKA…PSGV). Residues 75-87 (QVKEPEKESKDDA) are compositionally biased toward basic and acidic residues. In terms of domain architecture, N-acetyltransferase spans 512–681 (NRPRMSLDDP…YEAVCRSIQP (170 aa)).

The protein belongs to the acetyltransferase family.

The protein resides in the mitochondrion. It carries out the reaction L-glutamate + acetyl-CoA = N-acetyl-L-glutamate + CoA + H(+). It functions in the pathway amino-acid biosynthesis; L-arginine biosynthesis; N(2)-acetyl-L-ornithine from L-glutamate: step 1/4. N-acetylglutamate synthase involved in arginine biosynthesis. The polypeptide is Amino-acid acetyltransferase, mitochondrial (arg2) (Aspergillus terreus (strain NIH 2624 / FGSC A1156)).